The chain runs to 295 residues: Peptide transport system permease protein SapC (295 aa).

6 helical membrane passes run 27–47 (IALFSFYLLIALIFTALFASY), 102–122 (LLVVFSVAIIGGALGIIAGLL), 129–149 (FVGHIFDAFLSLPILLIAVVI), 157–177 (LWNAMFATLLAILPYFIHTIY), 219–239 (VARAFVIAVLDISALSFISLG), and 262–282 (PWTVLLPGFAIIFTILLSIIF). Residues 98–278 (LGSALLVVFS…GFAIIFTILL (181 aa)) form the ABC transmembrane type-1 domain.

The protein belongs to the binding-protein-dependent transport system permease family. OppBC subfamily.

The protein resides in the cell inner membrane. Involved in a peptide intake transport system that plays a role in the resistance to antimicrobial peptides. This Haemophilus influenzae (strain ATCC 51907 / DSM 11121 / KW20 / Rd) protein is Peptide transport system permease protein SapC (sapC).